We begin with the raw amino-acid sequence, 403 residues long: Farnesyl pyrophosphate synthase (403 aa).

The Mg(2+) site is built by Asp-156 and Asp-160. Positions 156-160 (DDLAD) match the DDXXD motif motif.

The protein belongs to the FPP/GGPP synthase family. Mg(2+) serves as cofactor.

The enzyme catalyses isopentenyl diphosphate + (2E)-geranyl diphosphate = (2Z,6E)-farnesyl diphosphate + diphosphate. Its pathway is pheromone biosynthesis. In terms of biological role, farnesyl pyrophosphate synthase involved in pheromone biosynthesis by catalyzing the formation of (2Z,6E)-farnesyl diphosphate. The sequence is that of Farnesyl pyrophosphate synthase from Nezara viridula (Southern green stink bug).